We begin with the raw amino-acid sequence, 643 residues long: Nicastrin (643 aa).

Residues 1–20 (MRFKNVLVLLLLLVFSVINS) form the signal peptide. Residues 21 to 611 (EPSAPATISD…VFKIGNSTTE (591 aa)) lie on the Extracellular side of the membrane. Cysteines 42 and 54 form a disulfide. N96 and N166 each carry an N-linked (GlcNAc...) asparagine glycan. Intrachain disulfides connect C204/C210 and C308/C318. N-linked (GlcNAc...) asparagine glycans are attached at residues N333 and N385. Cystine bridges form between C479/C486, C540/C551, and C546/C556. N584 carries N-linked (GlcNAc...) asparagine glycosylation. A helical transmembrane segment spans residues 612–632 (IWFLVSGLIELLVSIGLILYV). Topologically, residues 633-643 (KKFLSNRYKLL) are cytoplasmic.

Belongs to the nicastrin family. In terms of assembly, component of the gamma-secretase complex, a complex composed of a presenilin homodimer, nicastrin, aph1 and pen2.

It localises to the membrane. Essential subunit of the gamma-secretase complex, an endoprotease complex that catalyzes the intramembrane cleavage of integral membrane proteins such as Notch receptors and APP (amyloid-beta precursor protein). The protein is Nicastrin of Dictyostelium purpureum (Slime mold).